Consider the following 1013-residue polypeptide: Putative helicase mov-10-B.1 (1013 aa).

Composition is skewed to polar residues over residues 91 to 103 (QWSR…QNHA) and 113 to 123 (RPSTTRVSDPS). The disordered stretch occupies residues 91–129 (QWSRPYRSQQNHATPHLNDAISRPSTTRVSDPSSVPEPE). 550 to 557 (GPPGTGKT) lines the ATP pocket. The short motif at 672–675 (DEAG) is the DEAG box element.

The protein belongs to the DNA2/NAM7 helicase family. SDE3 subfamily.

The protein localises to the cytoplasm. Its subcellular location is the P-body. The enzyme catalyses ATP + H2O = ADP + phosphate + H(+). In terms of biological role, probable RNA helicase. Required for RNA-mediated gene silencing by the RNA-induced silencing complex (RISC). Required for both miRNA-mediated translational repression and miRNA-mediated cleavage of complementary mRNAs by RISC. The sequence is that of Putative helicase mov-10-B.1 (mov10b.1) from Danio rerio (Zebrafish).